The following is a 274-amino-acid chain: NADPH-dependent 7-cyano-7-deazaguanine reductase (274 aa).

80 to 82 (VES) provides a ligand contact to substrate. 82–83 (SK) is a binding site for NADPH. Cys181 acts as the Thioimide intermediate in catalysis. Residue Asp188 is the Proton donor of the active site. Substrate is bound at residue 220-221 (HE). 249-250 (RG) is an NADPH binding site.

Belongs to the GTP cyclohydrolase I family. QueF type 2 subfamily. In terms of assembly, homodimer.

The protein resides in the cytoplasm. It catalyses the reaction 7-aminomethyl-7-carbaguanine + 2 NADP(+) = 7-cyano-7-deazaguanine + 2 NADPH + 3 H(+). It participates in tRNA modification; tRNA-queuosine biosynthesis. Catalyzes the NADPH-dependent reduction of 7-cyano-7-deazaguanine (preQ0) to 7-aminomethyl-7-deazaguanine (preQ1). The protein is NADPH-dependent 7-cyano-7-deazaguanine reductase of Paraburkholderia xenovorans (strain LB400).